Reading from the N-terminus, the 281-residue chain is Penicillin-insensitive murein endopeptidase (281 aa).

A signal peptide spans M1 to A24. Cystine bridges form between C49–C270, C192–C240, and C221–C228. Zn(2+) contacts are provided by H115, H118, D125, and H216. The segment at E230–Q271 is disordered. Residues S246 to S255 are compositionally biased toward polar residues.

Belongs to the peptidase M74 family. In terms of assembly, dimer. The cofactor is Zn(2+).

The protein resides in the periplasm. Functionally, murein endopeptidase that cleaves the D-alanyl-meso-2,6-diamino-pimelyl amide bond that connects peptidoglycan strands. Likely plays a role in the removal of murein from the sacculus. The protein is Penicillin-insensitive murein endopeptidase (mepA) of Pectobacterium atrosepticum (strain SCRI 1043 / ATCC BAA-672) (Erwinia carotovora subsp. atroseptica).